The chain runs to 492 residues: MALLEDIINFATLNPMVVVAIPVFLFVISLLRSYLRLAHIPGPFAAGWTNLPRFSWVLSFKAHDIHTALHRKYGPLVRFGPNMVSVGDPKEVGHIYGFTDPWMKSDFYHALLMKPRGKPIPGIFAAQDENIHRALKKPISSAYSMSTLLSFEPYVDSTMRVFCEQLESRFIENKKPLDFGKWLQMFAFDVIGELTFSRRLGFLESGEDINHVMANIWETFKKTSLVTQMPWLDKLWTNNPIQRWRRGGGASPGAAFAMARVEERRELQRTTNKNDWHFNTRDFLSRFMEAEAKDPSIPPYALAAWASSNITAGSDTTGIFLRTIFYQLLTHPETLRKLREELDQAAAAGNLDDLASWKQTRELPYLDAVIKEGGRIHPPFGLPYERVVPAQGATICGKFLPGGTLVGMSAWVVHRNKELYGEDCDEWNPDRWLKCDTEKRRKMENALLTFGAGHRTCMGKHIAYLEMYKVVPTLLRKYDVSRLLCFLVSRTG.

A helical transmembrane segment spans residues 10–30 (FATLNPMVVVAIPVFLFVISL). N-linked (GlcNAc...) asparagine glycosylation is present at Asn-309. Cys-457 is a heme binding site.

It belongs to the cytochrome P450 family. It depends on heme as a cofactor.

The protein resides in the membrane. Its pathway is secondary metabolite biosynthesis. Its function is as follows. Cytochrome P450 monooxygenase; part of the cluster A that mediates the biosynthesis of azasperpyranones, members of the azaphilone family that exhibit anti-cancer activities. Azasperpyranones are synthesized by 2 clusters, A and B. Cluster A is responsible for the production of the polyhydric phenol moiety while the azaphilonoid scaffold is produced by the cluster B. The non-reducing polyketide synthase ATEG_03629 produces 5-methyl orsellinic acid, which is then reduced to 5-methyl orsellinic aldehyde by the NRPS-like protein ATEG_03630. 5-methyl orsellinic aldehyde is then first hydroxylated by the FAD-dependent monooxygenase ATEG_03635 and subsequently hydroxylated by the cytochrome P450 monooxygenase ATEG_03631 to produce the unstable polyhydric phenol precursor of azasperpyranones. On the other hand, the polyketide synthase ATEG_07659 is responsible for producing the 3,5-dimethyloctadienone moiety from acetyl-CoA, three malonyl-CoA, and two S-adenosyl methionines (SAM). The 3,5-dimethyloctadienone moiety is then loaded onto the SAT domain of ATEG_07661 and extended with four malonyl-CoA and one SAM, which leads to the formation of 2,4-dihydroxy-6-(5,7-dimethyl-2-oxo-trans-3-trans-5-nonadienyl)-3-methylbenzaldehyde (compound 8) after reductive release and aldol condensation. The FAD-dependent monooxygenase ATEG_07662 is the next enzyme in the biosynthesis sequence and hydroxylates the side chain at the benzylic position of compound 8. In Aspergillus nidulans, afoF, the ortholog of the FAD-dependent oxygenase ATEG_07660, is the key enzyme for the biosynthesis of asperfuranone by catalyzing the hydroxylation at C-8 of to prevent the formation of a six-membered ring hemiacetal intermediate and thus facilitating the formation of a five-membered ring to produce asperfuranone. In Aspergillus terreus, ATEG_07660 is probably not functional, which leads to the formation of the six-membered ring hemiacetal intermediate presperpyranone instead of asperfuranone. Finally, ATEG_03636 is involved in the condensation of the polyhydric phenol moiety produced by cluster A and the perasperpyranone precursor produced by cluster B, to yield azasperpyranone A. Further modifications of azasperpyranone A result in the production of derivatives, including azasperpyranone B to F. This Aspergillus terreus (strain NIH 2624 / FGSC A1156) protein is Cytochrome P450 monooxygenase ATEG_03631.